Here is a 225-residue protein sequence, read N- to C-terminus: NAD(P)H-quinone oxidoreductase subunit K, chloroplastic (225 aa).

Positions 43, 44, 108, and 139 each coordinate [4Fe-4S] cluster.

The protein belongs to the complex I 20 kDa subunit family. As to quaternary structure, NDH is composed of at least 16 different subunits, 5 of which are encoded in the nucleus. The cofactor is [4Fe-4S] cluster.

The protein localises to the plastid. It is found in the chloroplast thylakoid membrane. The catalysed reaction is a plastoquinone + NADH + (n+1) H(+)(in) = a plastoquinol + NAD(+) + n H(+)(out). The enzyme catalyses a plastoquinone + NADPH + (n+1) H(+)(in) = a plastoquinol + NADP(+) + n H(+)(out). Its function is as follows. NDH shuttles electrons from NAD(P)H:plastoquinone, via FMN and iron-sulfur (Fe-S) centers, to quinones in the photosynthetic chain and possibly in a chloroplast respiratory chain. The immediate electron acceptor for the enzyme in this species is believed to be plastoquinone. Couples the redox reaction to proton translocation, and thus conserves the redox energy in a proton gradient. This chain is NAD(P)H-quinone oxidoreductase subunit K, chloroplastic, found in Nasturtium officinale (Watercress).